The primary structure comprises 68 residues: MARVTVEDCLEKVDNRFMLVMMASKRVKQLYKGAKPLIDPKNNRHVVTSLREIAAGKLSAELSSKRSA.

Belongs to the RNA polymerase subunit omega family. The RNAP catalytic core consists of 2 alpha, 1 beta, 1 beta' and 1 omega subunit. When a sigma factor is associated with the core the holoenzyme is formed, which can initiate transcription.

It carries out the reaction RNA(n) + a ribonucleoside 5'-triphosphate = RNA(n+1) + diphosphate. Functionally, promotes RNA polymerase assembly. Latches the N- and C-terminal regions of the beta' subunit thereby facilitating its interaction with the beta and alpha subunits. The sequence is that of DNA-directed RNA polymerase subunit omega from Trichlorobacter lovleyi (strain ATCC BAA-1151 / DSM 17278 / SZ) (Geobacter lovleyi).